The chain runs to 329 residues: MKITVIGAGSWGTALALHFSQHGNRVSLWTRNADQVRQMQEARENKRGLPGFSFPETLEVCADLAEALKDSGLVLIVTSVAGLRSSAELLKQYGAGHLPVLAACKGFEQDTGLLTFQVLKEVLPDNKKIGVLSGPSFAQELAKQLPCAVVLASENQEWIEELVPQLNTTVMRLYGSTDVIGVAVGGSVKNVMAIATGLSDGLEYGLNARAALVTRGLAEITRLASAMGAQPKTMMGLAGIGDLILTCTGALSRNRRVGLGLAEGKELHQVLVEIGHVSEGVSTIEEVFNTACKYQIDMPITQTLLQLIRKEMTPQQVVERLMERSARFE.

The NADPH site is built by S10, W11, R31, and K105. The sn-glycerol 3-phosphate site is built by K105, G134, and S136. A138 is an NADPH binding site. Positions 189, 242, 252, 253, and 254 each coordinate sn-glycerol 3-phosphate. The active-site Proton acceptor is the K189. R253 provides a ligand contact to NADPH. NADPH contacts are provided by V277 and E279.

It belongs to the NAD-dependent glycerol-3-phosphate dehydrogenase family.

The protein resides in the cytoplasm. It carries out the reaction sn-glycerol 3-phosphate + NAD(+) = dihydroxyacetone phosphate + NADH + H(+). It catalyses the reaction sn-glycerol 3-phosphate + NADP(+) = dihydroxyacetone phosphate + NADPH + H(+). It participates in membrane lipid metabolism; glycerophospholipid metabolism. In terms of biological role, catalyzes the reduction of the glycolytic intermediate dihydroxyacetone phosphate (DHAP) to sn-glycerol 3-phosphate (G3P), the key precursor for phospholipid synthesis. This is Glycerol-3-phosphate dehydrogenase [NAD(P)+] from Neisseria gonorrhoeae (strain ATCC 700825 / FA 1090).